Consider the following 502-residue polypeptide: Potassium channel KAT3 (502 aa).

The Cytoplasmic portion of the chain corresponds to 1–67 (MPRSSRMNLW…PYDPRYKVWE (67 aa)). A helical transmembrane segment spans residues 68 to 88 (TFLIILVVYSAWICPLEFAFL). The Extracellular segment spans residues 89–95 (RYLPSAP). Residues 96-116 (FVVDDVVNGFFAVDIMLTFFV) form a helical membrane-spanning segment. The Cytoplasmic segment spans residues 117 to 138 (PFVDKKSYLLVNDPKKIAVRYL). A helical transmembrane segment spans residues 139-159 (SSWFVFDVCSTVPFHSISLLF). Residues 160–169 (NEHGHDLGFK) are Extracellular-facing. A helical; Voltage-sensor membrane pass occupies residues 170-190 (FLNVLRLWRLRRVSSMFARLE). The Cytoplasmic portion of the chain corresponds to 191 to 204 (KDIRFNYAVIRCTK). Residues 205–225 (LISVTLFAIHCAGCINYLIAD) traverse the membrane as a helical segment. At 226 to 252 (RYPDPRRTWIGAVMPNFREDGLWIRYV) the chain is on the extracellular side. Residues 253 to 272 (TAMYWSITTLTTTGYGDLHA) constitute an intramembrane region (pore-forming). The Extracellular portion of the chain corresponds to 273-276 (ENAR). Residues 277–297 (EMLFGICYMLFNLWLTAYLIG) form a helical membrane-spanning segment. Topologically, residues 298–502 (NMTNLVVHST…IRSNLQQVNV (205 aa)) are cytoplasmic. Residue 381–500 (LFKGVSSRFI…DIIRSNLQQV (120 aa)) coordinates a nucleoside 3',5'-cyclic phosphate.

Belongs to the potassium channel family. Plant (TC 1.A.1.4) subfamily.

It is found in the membrane. Probable inward-rectifying potassium channel. Assuming opened or closed conformations in response to the voltage difference across the membrane, the channel is activated by hyperpolarization. The polypeptide is Potassium channel KAT3 (Oryza sativa subsp. japonica (Rice)).